The chain runs to 523 residues: MSWSRHKSLQRIRSFRASAPAAAINLSNFDLSYMTARATTIQARRKAGGKSEPLIFDVPPDSAVLVEGVHVYIQLLDFASAMTERERETEASHRRVLSMLHLNYAACDQVAEEFEAQRVDFHGARMHAVIVSPPGPGNERDRAERALAFADAAKRAIEEVGRTTENGRYSTRVRVGIDSGSAVAVNSGTQDEREPLFLGAPANYAAKLAEGDEEGVFMSNRIRKDLGLPQLSSFDTLAAERASRTSSVGETGLSANTSFQSKRLSDAAIMTAASRARNSFILNVGTDANFSFHRHTPPLSTIDFALLTPSNSVRMGLMSIFGDIDGFTKYVDECIAAQRIGEMVSNLHVIRSELAATLSQDFLGRKVRFIGDCIHGLLATGTSYETDASGSVVASVKAAGGMRSSFELCQEELGGIENLGIAIGLEYGETPITRIGIRGDRSVRCSVSRAVSRSEELQGGCTGDQTALGPTALGHAPTSIRRLFAGGVAMGLDAGSVDEHLGSPPIVRSGEVSAAAAPYDSGE.

Guanylate cyclase domains lie at 69–209 (VHVY…AKLA) and 318–438 (MSIF…IGIR). 2 residues coordinate a ribonucleoside 5'-triphosphate: Tyr-72 and Arg-125. Mn(2+)-binding residues include Asp-323, Ile-324, and Asp-372.

The protein belongs to the adenylyl cyclase class-4/guanylyl cyclase family. Pyrimidine cyclase subfamily. In terms of assembly, monomer. Requires Mn(2+) as cofactor.

It localises to the cytoplasm. It catalyses the reaction UTP = 3',5'-cyclic UMP + diphosphate. Pycsar (pyrimidine cyclase system for antiphage resistance) provides immunity against bacteriophage. The pyrimidine cyclase (PycC) synthesizes cyclic nucleotides in response to infection; these serve as specific second messenger signals. The signals activate the nearby effector, leading to bacterial cell death and abortive phage infection. A clade A Pycsar system. In terms of biological role, the pyrimidine cyclase gene of a two-gene Pycsar system, generates cyclic UMP (cUMP) from UTP, has little to no activity on ATP, CTP or GTP. Expression of this and effector RsPycTM (AC A0A4R2UGS4) probably confers resistance to some bacteriophage. The genes are probably only expressed in response to bacteriophage infection. The chain is Uridylate cyclase from Rhizobium sp. (strain PP-F2F-G36).